The following is a 556-amino-acid chain: Formate--tetrahydrofolate ligase (556 aa).

65–72 (TPAGEGKT) lines the ATP pocket.

It belongs to the formate--tetrahydrofolate ligase family.

It carries out the reaction (6S)-5,6,7,8-tetrahydrofolate + formate + ATP = (6R)-10-formyltetrahydrofolate + ADP + phosphate. Its pathway is one-carbon metabolism; tetrahydrofolate interconversion. The protein is Formate--tetrahydrofolate ligase of Clostridium cylindrosporum.